Reading from the N-terminus, the 497-residue chain is MEKQVDVLIIGAGISGIGLAVHLSKNCPQRKFEILERRESFGGTWDLFRYPGIRSDSDMSTFGFNFKPWAKDKVLASGAEIKGYLSDVISENQLKDKIHFGHRVLSANYDSTKKKWLVEIEDNNKKKQTWSANFVMGCTGYYNYDQGYAPKFPKQEDFKGQFIHPQHWPENLDYTGKKVVIIGSGATAITLVPSMVKGGAGHVTMLQRSPTYIATIPSIDFIYEKTRKFMSEETAYKFTRARNIGMQRGIYALAQKYPKTVRRLLLKGIELQLKGKVDMKHFTPSYNPWDQRLCVVPDGDLFKALREGQASVETDQIEKFTANGIQLKSGKHLEADIVISATGLEIQILGGVQGSIDGKPMNTSQHMLYQGVMVSDVPNMAMIIGYINASWTLKVDIAADYICRLINHMDKNGFDEVIAHADPSQRENDTIMGKMSSGYIARAADVMPKQGKQAPWKITNNYLADRKELKDAKFNDGVLEFHKRGEQTANRKPKLVS.

A helical transmembrane segment spans residues 4–24 (QVDVLIIGAGISGIGLAVHLS). FAD is bound by residues S15, E36, D56, F62, and V104. 54 to 56 (RSD) provides a ligand contact to NADP(+). NADP(+)-binding positions include 184-190 (SGATAIT), 208-209 (RS), and 292-293 (RL). V395 serves as a coordination point for FAD.

The protein belongs to the FAD-binding monooxygenase family. FAD serves as cofactor.

The protein localises to the cell membrane. The protein operates within hydrocarbon metabolism; alkane degradation. In terms of biological role, is involved in the degradation of n-alkanes with C chain lengths of 32 and longer. Allows Acinetobacter sp. strain DSM 17874 to grow on long-chain n-alkanes such as dotriacontane (C32H66) or hexatriacontane (C36H74) as a sole carbon source. This chain is Probable FAD-binding monooxygenase AlmA, found in Acinetobacter sp.